The primary structure comprises 254 residues: Diphthine synthase (254 aa).

Residues aspartate 83, leucine 86, 111 to 112 (SI), leucine 163, and valine 205 each bind S-adenosyl-L-methionine.

This sequence belongs to the diphthine synthase family. In terms of assembly, homodimer.

The enzyme catalyses 2-[(3S)-amino-3-carboxypropyl]-L-histidyl-[translation elongation factor 2] + 3 S-adenosyl-L-methionine = diphthine-[translation elongation factor 2] + 3 S-adenosyl-L-homocysteine + 3 H(+). It participates in protein modification; peptidyl-diphthamide biosynthesis. Its function is as follows. S-adenosyl-L-methionine-dependent methyltransferase that catalyzes the trimethylation of the amino group of the modified target histidine residue in translation elongation factor 2 (EF-2), to form an intermediate called diphthine. The three successive methylation reactions represent the second step of diphthamide biosynthesis. This chain is Diphthine synthase, found in Pyrobaculum aerophilum (strain ATCC 51768 / DSM 7523 / JCM 9630 / CIP 104966 / NBRC 100827 / IM2).